The chain runs to 58 residues: Large ribosomal subunit protein uL30 (58 aa).

Belongs to the universal ribosomal protein uL30 family. Part of the 50S ribosomal subunit.

The sequence is that of Large ribosomal subunit protein uL30 from Pseudomonas putida (strain ATCC 700007 / DSM 6899 / JCM 31910 / BCRC 17059 / LMG 24140 / F1).